We begin with the raw amino-acid sequence, 602 residues long: Zinc finger MYND domain-containing protein 11 (602 aa).

The region spanning 6–82 (KRRQADTKAI…CKGSKAGIEQ (77 aa)) is the SAMD1-like winged helix (WH) domain. Residues 100-148 (DWYCFECHLPGEVLICDLCFRVYHSKCLSDEFRLRDSSSHWQCPVCRSI) form a PHD-type zinc finger. The Bromo domain maps to 149-255 (KKKHSNKQEM…KDTCHELDEL (107 aa)). Zn(2+) is bound by residues Cys-258, Cys-261, Cys-277, and His-281. One can recognise a PWWP domain in the interval 280–331 (NHELVWAKMKGFGFWPAKVMQKEDNQVDVRFFGHHHQRAWIPSENIQDITVN). The aromatic cage required for H3.3K36me3-specific binding stretch occupies residues 291–310 (FGFWPAKVMQKEDNQVDVRF). Lys-366 is covalently cross-linked (Glycyl lysine isopeptide (Lys-Gly) (interchain with G-Cter in SUMO2)). The interval 366 to 461 (KNEDRGEEEA…HRSTQTTSDG (96 aa)) is disordered. Residues 394–400 (RAKKGRR) carry the Nuclear localization signal motif. Residues Lys-407 and Lys-408 each participate in a glycyl lysine isopeptide (Lys-Gly) (interchain with G-Cter in SUMO2) cross-link. Residue Ser-421 is modified to Phosphoserine. Positions 435-461 (SVSTQTKKLSASSPRMLHRSTQTTSDG) are enriched in polar residues. Residues Cys-563, Cys-566, Cys-574, Cys-575, Cys-581, Cys-585, His-594, and Cys-598 each contribute to the Zn(2+) site. Residues 563–598 (CYNCEEEAMYHCCWNTSYCSIKCQQEHWHAEHKRTC) form an MYND-type zinc finger.

In terms of assembly, homooligomer; forms homooligomers via its C-terminus. Interacts with histone H3.3 trimethylated at 'Lys-36' (H3.3K36me3). Interacts (via MYND-type zinc finger) with NCOR1. Interacts (via MYND-type zinc finger) with MGA protein (via PXLXP motif). Interacts (via MYND-type zinc finger) with EZH2. Interacts with EMSY and E2F6. Interacts with PIAS1 and UBE2I. Ubiquitinated, leading to proteasomal degradation. In terms of processing, sumoylated following its interaction with PIAS1 and UBE2I.

The protein resides in the nucleus. It localises to the chromosome. In terms of biological role, chromatin reader that specifically recognizes and binds histone H3.3 trimethylated at 'Lys-36' (H3.3K36me3) and regulates RNA polymerase II elongation. Does not bind other histone H3 subtypes (H3.1 or H3.2). Colocalizes with highly expressed genes and functions as a transcription corepressor by modulating RNA polymerase II at the elongation stage. Binds non-specifically to dsDNA. Acts as a tumor-suppressor by repressing a transcriptional program essential for tumor cell growth. In Mus musculus (Mouse), this protein is Zinc finger MYND domain-containing protein 11 (Zmynd11).